The following is a 213-amino-acid chain: Large ribosomal subunit protein uL1 (213 aa).

The protein belongs to the universal ribosomal protein uL1 family.

This Chlamydomonas reinhardtii (Chlamydomonas smithii) protein is Large ribosomal subunit protein uL1 (RPL10A).